The primary structure comprises 609 residues: Carotenoid cleavage dioxygenase 7, chloroplastic (609 aa).

The transit peptide at 1 to 34 directs the protein to the chloroplast; sequence MATQAIAPMHAAVVHRHHVLPPRRCVRRRGVFVR. Positions 263, 316, 394, and 603 each coordinate Fe cation.

Belongs to the carotenoid oxygenase family. Requires Fe(2+) as cofactor. Expressed in vascular bundles of roots, leaves, stems and panicles.

The protein resides in the plastid. It is found in the chloroplast. The enzyme catalyses 9-cis-beta-carotene + O2 = 9-cis-10'-apo-beta-carotenal + beta-ionone. Its function is as follows. Involved in strigolactones biosynthesis by cleaving asymmetrically a variety of linear and cyclic carotenoids at the 9-10 double bond. Produces one C(13) beta-ionone and the C(27) 10'-apo-beta-carotenal. Strigolactones are hormones that inhibit tillering and shoot branching through the MAX-dependent pathway, contribute to the regulation of shoot architectural response to phosphate-limiting conditions and function as rhizosphere signal that stimulates hyphal branching of arbuscular mycorrhizal fungi and trigger seed germination of root parasitic weeds. Can rescue the phenotype in the Arabidopsis max3 mutant. The polypeptide is Carotenoid cleavage dioxygenase 7, chloroplastic (CCD7) (Oryza sativa subsp. japonica (Rice)).